The sequence spans 78 residues: D-alanyl carrier protein (78 aa).

Residues 1 to 78 (MEFKQEVLDV…NIVNKLTELK (78 aa)) enclose the Carrier domain. Ser-36 bears the O-(pantetheine 4'-phosphoryl)serine mark.

Belongs to the DltC family. In terms of processing, 4'-phosphopantetheine is transferred from CoA to a specific serine of apo-DCP.

Its subcellular location is the cytoplasm. The protein operates within cell wall biogenesis; lipoteichoic acid biosynthesis. Carrier protein involved in the D-alanylation of lipoteichoic acid (LTA). The loading of thioester-linked D-alanine onto DltC is catalyzed by D-alanine--D-alanyl carrier protein ligase DltA. The DltC-carried D-alanyl group is further transferred to cell membrane phosphatidylglycerol (PG) by forming an ester bond, probably catalyzed by DltD. D-alanylation of LTA plays an important role in modulating the properties of the cell wall in Gram-positive bacteria, influencing the net charge of the cell wall. The chain is D-alanyl carrier protein from Bacillus velezensis (strain DSM 23117 / BGSC 10A6 / LMG 26770 / FZB42) (Bacillus amyloliquefaciens subsp. plantarum).